The following is a 486-amino-acid chain: Keratin, type II cuticular Hb6 (486 aa).

The tract at residues 1-106 is head; sequence MTCGSYCGGR…PNAQCVKHEE (106 aa). The IF rod domain occupies 106–417; the sequence is EKEQIKCLNS…RLLEGEEQRL (312 aa). The interval 107-141 is coil 1A; the sequence is KEQIKCLNSKFAAFIDKVRFLEQQNKLLETKWQFY. Positions 142–151 are linker 1; sequence QNRKCCESNM. The tract at residues 152 to 252 is coil 1B; that stretch reads EPLFEGYIEA…YDEETRILHS (101 aa). Residue Lys-212 forms a Glycyl lysine isopeptide (Lys-Gly) (interchain with G-Cter in SUMO1) linkage. The segment at 253–269 is linker 12; sequence HISDTSIVVKMDNSRDL. The interval 270–413 is coil 2; sequence NMDCVVAEIK…TTYRRLLEGE (144 aa). Residues 414-486 form a tail region; sequence EQRLCEGVGS…GACSGGCKKC (73 aa).

Belongs to the intermediate filament family. In terms of assembly, heterotetramer of two type I and two type II keratins.

The polypeptide is Keratin, type II cuticular Hb6 (Krt86) (Mus musculus (Mouse)).